Consider the following 875-residue polypeptide: Translation initiation factor IF-2 (875 aa).

Disordered regions lie at residues E123–K204 and E240–T278. A compositionally biased stretch (basic and acidic residues) spans E240–R252. Basic residues predominate over residues P259 to K268. Positions K269–T278 are enriched in basic and acidic residues. In terms of domain architecture, tr-type G spans E379–E547. Positions G388 to T395 are G1. GTP is bound at residue G388 to T395. Residues G413–H417 form a G2 region. Positions D435 to G438 are G3. Residues D435–H439 and N489–D492 contribute to the GTP site. The interval N489 to D492 is G4. The tract at residues S525–K527 is G5.

Belongs to the TRAFAC class translation factor GTPase superfamily. Classic translation factor GTPase family. IF-2 subfamily.

Its subcellular location is the cytoplasm. Its function is as follows. One of the essential components for the initiation of protein synthesis. Protects formylmethionyl-tRNA from spontaneous hydrolysis and promotes its binding to the 30S ribosomal subunits. Also involved in the hydrolysis of GTP during the formation of the 70S ribosomal complex. In Persephonella marina (strain DSM 14350 / EX-H1), this protein is Translation initiation factor IF-2.